The primary structure comprises 464 residues: NADH dehydrogenase [ubiquinone] flavoprotein 1, mitochondrial (464 aa).

Residues 1-20 (MLATRRLLGWSLPARVSVRF) constitute a mitochondrion transit peptide. Lys81 bears the N6-acetyllysine; alternate mark. Lys81 is modified (N6-succinyllysine; alternate). 87–96 (GRGGAGFPTG) lines the NADH pocket. Lys104 is subject to N6-acetyllysine. An FMN-binding site is contributed by 199-247 (RGAGAYICGEETALIESIEGKQGKPRLKPPFPADVGVFGCPTTVANVET). Arg257 is subject to Omega-N-methylarginine. At Lys375 the chain carries N6-acetyllysine. [4Fe-4S] cluster-binding residues include Cys379, Cys382, Cys385, and Cys425.

Belongs to the complex I 51 kDa subunit family. As to quaternary structure, core subunit of respiratory chain NADH dehydrogenase (Complex I) which is composed of 45 different subunits. This is a component of the flavoprotein-sulfur (FP) fragment of the enzyme. Interacts with RAB5IF. The cofactor is FMN. [4Fe-4S] cluster is required as a cofactor.

It localises to the mitochondrion inner membrane. It catalyses the reaction a ubiquinone + NADH + 5 H(+)(in) = a ubiquinol + NAD(+) + 4 H(+)(out). Functionally, core subunit of the mitochondrial membrane respiratory chain NADH dehydrogenase (Complex I) which catalyzes electron transfer from NADH through the respiratory chain, using ubiquinone as an electron acceptor. Part of the peripheral arm of the enzyme, where the electrons from NADH are accepted by flavin mononucleotide (FMN) and then passed along a chain of iron-sulfur clusters by electron tunnelling to the final acceptor ubiquinone. Contains FMN, which is the initial electron acceptor as well as one iron-sulfur cluster. In Pan troglodytes (Chimpanzee), this protein is NADH dehydrogenase [ubiquinone] flavoprotein 1, mitochondrial.